The following is a 203-amino-acid chain: DNA-directed RNA polymerase subunit gamma (203 aa).

Residues Cys34, Cys36, Cys49, and Cys52 each contribute to the Zn(2+) site.

Belongs to the RNA polymerase beta' chain family. RpoC1 subfamily. In terms of assembly, in cyanobacteria the RNAP catalytic core is composed of 2 alpha, 1 beta, 1 beta', 1 gamma and 1 omega subunit. When a sigma factor is associated with the core the holoenzyme is formed, which can initiate transcription. Zn(2+) is required as a cofactor.

The catalysed reaction is RNA(n) + a ribonucleoside 5'-triphosphate = RNA(n+1) + diphosphate. DNA-dependent RNA polymerase catalyzes the transcription of DNA into RNA using the four ribonucleoside triphosphates as substrates. The sequence is that of DNA-directed RNA polymerase subunit gamma (rpoC1) from Prochlorothrix hollandica.